The chain runs to 276 residues: B3 domain-containing protein REM22 (276 aa).

The segment at residues 11–115 (SETMSIQDTV…VFHFCVYEYG (105 aa)) is a DNA-binding region (TF-B3). Residues 141–164 (GNEESTKGLEESPRRGGTSRRRAK) form a disordered region. Positions 144 to 154 (ESTKGLEESPR) are enriched in basic and acidic residues.

Its subcellular location is the nucleus. In Arabidopsis thaliana (Mouse-ear cress), this protein is B3 domain-containing protein REM22 (REM22).